The sequence spans 330 residues: Beta-ketoacyl-[acyl-carrier-protein] synthase III (330 aa).

Active-site residues include Cys-114 and His-254. An ACP-binding region spans residues 255–259; that stretch reads QANLR. The active site involves Asn-284.

This sequence belongs to the thiolase-like superfamily. FabH family. In terms of assembly, homodimer.

It is found in the cytoplasm. The enzyme catalyses malonyl-[ACP] + acetyl-CoA + H(+) = 3-oxobutanoyl-[ACP] + CO2 + CoA. It functions in the pathway lipid metabolism; fatty acid biosynthesis. Catalyzes the condensation reaction of fatty acid synthesis by the addition to an acyl acceptor of two carbons from malonyl-ACP. Catalyzes the first condensation reaction which initiates fatty acid synthesis and may therefore play a role in governing the total rate of fatty acid production. Possesses both acetoacetyl-ACP synthase and acetyl transacylase activities. Its substrate specificity determines the biosynthesis of branched-chain and/or straight-chain of fatty acids. This is Beta-ketoacyl-[acyl-carrier-protein] synthase III from Roseiflexus castenholzii (strain DSM 13941 / HLO8).